A 299-amino-acid chain; its full sequence is Lathosterol oxidase (299 aa).

Transmembrane regions (helical) follow at residues 32–52 (VSLL…CATL), 79–99 (FTVK…LLEL), and 117–137 (IHLI…IYWI). Residues 124-252 (ISFLFFTDML…YFTLWDRIGG (129 aa)) enclose the Fatty acid hydroxylase domain. Positions 138 to 143 (HRGLHH) match the Histidine box-1 motif. The Histidine box-2 motif lies at 151-155 (HKPHH). Positions 228–233 (HHTDHH) match the Histidine box-3 motif. Ser253 carries the post-translational modification Phosphoserine.

It belongs to the sterol desaturase family. Requires Fe cation as cofactor.

It localises to the endoplasmic reticulum membrane. It catalyses the reaction a Delta(7)-sterol + 2 Fe(II)-[cytochrome b5] + O2 + 2 H(+) = a Delta(5),Delta(7)-sterol + 2 Fe(III)-[cytochrome b5] + 2 H2O. The enzyme catalyses lathosterol + 2 Fe(II)-[cytochrome b5] + O2 + 2 H(+) = 7-dehydrocholesterol + 2 Fe(III)-[cytochrome b5] + 2 H2O. The catalysed reaction is 5alpha-cholesta-7,24-dien-3beta-ol + 2 Fe(II)-[cytochrome b5] + O2 + 2 H(+) = 7-dehydrodesmosterol + 2 Fe(III)-[cytochrome b5] + 2 H2O. It participates in steroid biosynthesis; cholesterol biosynthesis. Its function is as follows. Catalyzes the penultimate step of the biosynthesis of cholesterol, the dehydrogenation of lathosterol into 7-dehydrocholesterol (7-DHC). Cholesterol is the major sterol component in mammalian membranes and a precursor for bile acid and steroid hormone synthesis. In addition to its essential role in cholesterol biosynthesis, it also indirectly regulates ferroptosis through the production of 7-DHC. By diverting the spread of damage caused by peroxyl radicals from the phospholipid components to its sterol nucleus, 7-DHC prevents this form of cell death. The chain is Lathosterol oxidase from Rattus norvegicus (Rat).